Reading from the N-terminus, the 174-residue chain is V-type proton ATPase catalytic subunit A (174 aa).

It belongs to the ATPase alpha/beta chains family. In terms of assembly, V-ATPase is a heteromultimeric enzyme made up of two complexes: the ATP-hydrolytic V1 complex and the proton translocation V0 complex. The V1 complex consists of three catalytic AB heterodimers that form a heterohexamer, three peripheral stalks each consisting of EG heterodimers, one central rotor including subunits D and F, and the regulatory subunits C and H. The proton translocation complex V0 consists of the proton transport subunit a, a ring of proteolipid subunits c9c'', rotary subunit d, subunits e and f, and the accessory subunits ATP6AP1/Ac45 and ATP6AP2/PRR. Interacts with the V0 complex V-ATPase subunit a4 ATP6V0A4. Interacts with WFS1. Interacts with alpha-crystallin B chain/CRYAB and with MTOR, forming a ternary complex.

It localises to the cytoplasm. The protein localises to the cytosol. Its subcellular location is the cytoplasmic vesicle. The protein resides in the secretory vesicle. It is found in the clathrin-coated vesicle membrane. It localises to the lysosome. The enzyme catalyses ATP + H2O + 4 H(+)(in) = ADP + phosphate + 5 H(+)(out). Its activity is regulated as follows. ATP hydrolysis occurs at the interface between the nucleotide-binding domains of subunits A and B. ATP hydrolysis triggers a conformational change in the subunits D and F, which induces a shift of subunit d. The c-ring is subsequently rotated and results in a continuous proton translocation across the membrane. In terms of biological role, catalytic subunit of the V1 complex of vacuolar(H+)-ATPase (V-ATPase), a multisubunit enzyme composed of a peripheral complex (V1) that hydrolyzes ATP and a membrane integral complex (V0) that translocates protons. V-ATPase is responsible for acidifying and maintaining the pH of intracellular compartments and in some cell types, is targeted to the plasma membrane, where it is responsible for acidifying the extracellular environment. In aerobic conditions, involved in intracellular iron homeostasis, thus triggering the activity of Fe(2+) prolyl hydroxylase (PHD) enzymes, and leading to HIF1A hydroxylation and subsequent proteasomal degradation. May play a role in neurite development and synaptic connectivity. This chain is V-type proton ATPase catalytic subunit A, found in Mesocricetus auratus (Golden hamster).